The primary structure comprises 648 residues: Beta-glucuronidase (648 aa).

An N-terminal signal peptide occupies residues 1–22; the sequence is MSLKWSACWVALGQLLCSCALA. Asparagine 172 and asparagine 416 each carry an N-linked (GlcNAc...) asparagine glycan. Glutamate 447 acts as the Proton donor in catalysis. Asparagine 627 carries N-linked (GlcNAc...) asparagine glycosylation.

It belongs to the glycosyl hydrolase 2 family. In terms of assembly, homotetramer.

Its subcellular location is the lysosome. The protein resides in the endoplasmic reticulum. The catalysed reaction is a beta-D-glucuronoside + H2O = D-glucuronate + an alcohol. Inhibited by L-aspartic acid. In terms of biological role, plays an important role in the degradation of dermatan and keratan sulfates. In Mus musculus (Mouse), this protein is Beta-glucuronidase (Gusb).